The chain runs to 507 residues: Cytochrome P450 4X1 (507 aa).

A helical transmembrane segment spans residues 14-34 (LHLALVFCLALVLMQAMKLYL). Residue cysteine 452 coordinates heme.

Belongs to the cytochrome P450 family. It depends on heme as a cofactor. As to expression, expressed in brain and aorta. In the brain, expressed in the Purkinje cells of the cerebellum, pyramidal neurons in the dentate gyrus of the hippocampus, cortical forebrain neurons and those of brain stem nuclei (at protein level). In addition to neurons, also expressed in cerebral vascular endothelial cells (at protein level). Also expressed in epithelial cells of the choroid plexus (at protein level). Hardly detectable in heart, lung, kidney and spleen.

The protein localises to the endoplasmic reticulum membrane. It is found in the microsome membrane. It carries out the reaction N-(5Z,8Z,11Z,14Z-eicosatetraenoyl)-ethanolamine + reduced [NADPH--hemoprotein reductase] + O2 = N-(14,15-epoxy-5Z,8Z,11Z-eicosatrienoyl)-ethanolamine + oxidized [NADPH--hemoprotein reductase] + H2O + H(+). Its function is as follows. A cytochrome P450 monooxygenase that selectively catalyzes the epoxidation of the last double bond of the arachidonoyl moiety of anandamide, potentially modulating endocannabinoid signaling. Has no hydroxylase activity toward various fatty acids, steroids and prostaglandins. Mechanistically, uses molecular oxygen inserting one oxygen atom into a substrate, and reducing the second into a water molecule, with two electrons provided by NADPH via cytochrome P450 reductase (CPR; NADPH-ferrihemoprotein reductase). This chain is Cytochrome P450 4X1, found in Mus musculus (Mouse).